The following is a 279-amino-acid chain: Energy-coupling factor transporter ATP-binding protein EcfA2 (279 aa).

One can recognise an ABC transporter domain in the interval 3–245 (IALENVNFIY…VVFMEEVQLG (243 aa)). Residue 40 to 47 (GHTGSGKS) participates in ATP binding.

It belongs to the ABC transporter superfamily. Energy-coupling factor EcfA family. Forms a stable energy-coupling factor (ECF) transporter complex composed of 2 membrane-embedded substrate-binding proteins (S component), 2 ATP-binding proteins (A component) and 2 transmembrane proteins (T component).

It is found in the cell membrane. ATP-binding (A) component of a common energy-coupling factor (ECF) ABC-transporter complex. Unlike classic ABC transporters this ECF transporter provides the energy necessary to transport a number of different substrates. The protein is Energy-coupling factor transporter ATP-binding protein EcfA2 of Streptococcus pneumoniae serotype 2 (strain D39 / NCTC 7466).